The following is a 397-amino-acid chain: Phosphoglycerate kinase (397 aa).

Substrate contacts are provided by residues 21–23, arginine 37, 60–63, arginine 119, and arginine 152; these read DFN and HLGR. ATP is bound by residues lysine 203, glycine 294, glutamate 325, and 354 to 357; that span reads GGDS.

The protein belongs to the phosphoglycerate kinase family. Monomer.

The protein localises to the cytoplasm. The enzyme catalyses (2R)-3-phosphoglycerate + ATP = (2R)-3-phospho-glyceroyl phosphate + ADP. It functions in the pathway carbohydrate degradation; glycolysis; pyruvate from D-glyceraldehyde 3-phosphate: step 2/5. The polypeptide is Phosphoglycerate kinase (Chlorobium phaeobacteroides (strain DSM 266 / SMG 266 / 2430)).